A 187-amino-acid polypeptide reads, in one-letter code: Anterior gradient protein 1 (187 aa).

Residues 1-20 (MQTGLSLVCLVLLCSALGEA) form the signal peptide.

This sequence belongs to the AGR family.

The protein localises to the secreted. In terms of biological role, probably involved in cement gland formation. This is Anterior gradient protein 1 (ag1) from Xenopus tropicalis (Western clawed frog).